Reading from the N-terminus, the 878-residue chain is Phosphoenolpyruvate carboxylase (878 aa).

Residues His137 and Lys545 contribute to the active site.

Belongs to the PEPCase type 1 family. Mg(2+) serves as cofactor.

It catalyses the reaction oxaloacetate + phosphate = phosphoenolpyruvate + hydrogencarbonate. Its function is as follows. Forms oxaloacetate, a four-carbon dicarboxylic acid source for the tricarboxylic acid cycle. The chain is Phosphoenolpyruvate carboxylase from Yersinia pestis bv. Antiqua (strain Antiqua).